The following is a 189-amino-acid chain: Sec-independent protein translocase protein TatB (189 aa).

The helical transmembrane segment at 1–21 (MFGVGIFEVLVILIVAVIALG) threads the bilayer. Residues 152–189 (TQKPQNSIDSINSKESSVDSLHSPSIVESTQSSSSKDS) form a disordered region. The span at 153–189 (QKPQNSIDSINSKESSVDSLHSPSIVESTQSSSSKDS) shows a compositional bias: polar residues.

This sequence belongs to the TatB family. The Tat system comprises two distinct complexes: a TatABC complex, containing multiple copies of TatA, TatB and TatC subunits, and a separate TatA complex, containing only TatA subunits. Substrates initially bind to the TatABC complex, which probably triggers association of the separate TatA complex to form the active translocon.

It is found in the cell inner membrane. Its function is as follows. Part of the twin-arginine translocation (Tat) system that transports large folded proteins containing a characteristic twin-arginine motif in their signal peptide across membranes. Together with TatC, TatB is part of a receptor directly interacting with Tat signal peptides. TatB may form an oligomeric binding site that transiently accommodates folded Tat precursor proteins before their translocation. The polypeptide is Sec-independent protein translocase protein TatB (Helicobacter hepaticus (strain ATCC 51449 / 3B1)).